The following is a 102-amino-acid chain: Nucleoid-associated protein WIGBR5260 (102 aa).

This sequence belongs to the YbaB/EbfC family. In terms of assembly, homodimer.

The protein resides in the cytoplasm. Its subcellular location is the nucleoid. Binds to DNA and alters its conformation. May be involved in regulation of gene expression, nucleoid organization and DNA protection. The chain is Nucleoid-associated protein WIGBR5260 from Wigglesworthia glossinidia brevipalpis.